A 264-amino-acid chain; its full sequence is Stress response regulator protein 1 (264 aa).

The interval 50–74 is disordered; it reads IYSDCDNNKNNNDDDDDDDDYNKDT. Over residues 62–74 the composition is skewed to acidic residues; the sequence is DDDDDDDDYNKDT. The Response regulatory domain maps to 138–256; it reads RFLIVDDNII…LDLIGGSIDD (119 aa). Asp-189 carries the 4-aspartylphosphate modification.

In terms of biological role, required for stress adaptation, morphogenesis and virulence. The sequence is that of Stress response regulator protein 1 (SRR1) from Candida tropicalis (strain ATCC MYA-3404 / T1) (Yeast).